The chain runs to 513 residues: MEKFEGYSEKQKSRQQYFVYPLLFQEYIYAFAHDYGLNGSEPVEIIGCNNKKFSSLLVKRLIIRMYQQNFWINSVNHPNQDRLLDHSNYFYSEFYSQILSEGFAIVVEIPFSLGELSCPEEKEIPKFQNLQSIHSIFPFLEDKFLHLHYLSHLEIPYPIHLEILVQLLEYRIQDVPSLHLLRFFLNYYSNWNSLITSMKSIFLLKKENKRLFRFLYNSYVSEYEFFLLFLRKQSSCLRLTSSGTFLERIHFSRKMEHFGVMYPGFFRKTIWFFMDPLMHYARYQGKAILASKGTLLLKKKWKSYLVNFSQYFFSFWTQPQRIRINQLTNSCFDFLGYLSSVPINTLLVRNQMLENSFLIDTRMKKFDTTVPATPLIGSLSKAQFCTGSGHPISKPVWTDLSDWDILDRFGRISRNLFHYHSGSSKKRTLYRLKYILRLSCARTLARKHKSTVRTFMQRLGSVFLEEFFTEEEQVFSLMFTKTTHFSFHGSHSERIWYLDIIRINDLVNPLTLN.

It belongs to the intron maturase 2 family. MatK subfamily.

The protein localises to the plastid. The protein resides in the chloroplast. Its function is as follows. Usually encoded in the trnK tRNA gene intron. Probably assists in splicing its own and other chloroplast group II introns. In Phragmites australis (Common reed), this protein is Maturase K.